The following is a 101-amino-acid chain: Small ribosomal subunit protein uS14 (101 aa).

The protein belongs to the universal ribosomal protein uS14 family. In terms of assembly, part of the 30S ribosomal subunit. Contacts proteins S3 and S10.

In terms of biological role, binds 16S rRNA, required for the assembly of 30S particles and may also be responsible for determining the conformation of the 16S rRNA at the A site. The protein is Small ribosomal subunit protein uS14 of Buchnera aphidicola subsp. Schizaphis graminum (strain Sg).